A 74-amino-acid chain; its full sequence is uncharacterized protein (74 aa).

The disordered stretch occupies residues 39-74 (SSPQAPGTLKPRALVRPSPGPVQENHLSEAQFPPKL).

This is an uncharacterized protein from Homo sapiens (Human).